The chain runs to 477 residues: Protein nucleotidyltransferase YdiU (477 aa).

ATP is bound by residues glycine 89, glycine 91, arginine 92, lysine 112, aspartate 124, glycine 125, arginine 178, and arginine 185. The active-site Proton acceptor is the aspartate 257. 2 residues coordinate Mg(2+): asparagine 258 and aspartate 267. Residue aspartate 267 coordinates ATP.

It belongs to the SELO family. Requires Mg(2+) as cofactor. The cofactor is Mn(2+).

The enzyme catalyses L-seryl-[protein] + ATP = 3-O-(5'-adenylyl)-L-seryl-[protein] + diphosphate. It catalyses the reaction L-threonyl-[protein] + ATP = 3-O-(5'-adenylyl)-L-threonyl-[protein] + diphosphate. It carries out the reaction L-tyrosyl-[protein] + ATP = O-(5'-adenylyl)-L-tyrosyl-[protein] + diphosphate. The catalysed reaction is L-histidyl-[protein] + UTP = N(tele)-(5'-uridylyl)-L-histidyl-[protein] + diphosphate. The enzyme catalyses L-seryl-[protein] + UTP = O-(5'-uridylyl)-L-seryl-[protein] + diphosphate. It catalyses the reaction L-tyrosyl-[protein] + UTP = O-(5'-uridylyl)-L-tyrosyl-[protein] + diphosphate. In terms of biological role, nucleotidyltransferase involved in the post-translational modification of proteins. It can catalyze the addition of adenosine monophosphate (AMP) or uridine monophosphate (UMP) to a protein, resulting in modifications known as AMPylation and UMPylation. The sequence is that of Protein nucleotidyltransferase YdiU from Synechocystis sp. (strain ATCC 27184 / PCC 6803 / Kazusa).